Here is a 437-residue protein sequence, read N- to C-terminus: UDP-N-acetylmuramoylalanine--D-glutamate ligase (437 aa).

112–118 (GSNGKST) contributes to the ATP binding site.

The protein belongs to the MurCDEF family.

The protein localises to the cytoplasm. It carries out the reaction UDP-N-acetyl-alpha-D-muramoyl-L-alanine + D-glutamate + ATP = UDP-N-acetyl-alpha-D-muramoyl-L-alanyl-D-glutamate + ADP + phosphate + H(+). The protein operates within cell wall biogenesis; peptidoglycan biosynthesis. Its function is as follows. Cell wall formation. Catalyzes the addition of glutamate to the nucleotide precursor UDP-N-acetylmuramoyl-L-alanine (UMA). This is UDP-N-acetylmuramoylalanine--D-glutamate ligase (murD) from Haemophilus influenzae (strain ATCC 51907 / DSM 11121 / KW20 / Rd).